We begin with the raw amino-acid sequence, 746 residues long: Serine/threonine-protein kinase SMU1 (746 aa).

2 disordered regions span residues 1–138 (MSLV…DTLH) and 155–212 (QRSH…GSRN). 2 stretches are compositionally biased toward low complexity: residues 15–54 (SSAN…SSTT) and 85–105 (SVSS…PSSA). Polar residues-rich tracts occupy residues 106–121 (LPWS…STAT), 128–138 (RSNTAGPDTLH), and 156–176 (RSHS…SSPT). Over residues 194–203 (PSRDRERSRD) the composition is skewed to basic and acidic residues. Residues 237–250 (ISTPYDPVHLTHVG) enclose the CRIB domain. The disordered stretch occupies residues 301–451 (GGSDVWKKMG…RRETKKSTIK (151 aa)). Over residues 370-380 (PPSNASTSSAD) the composition is skewed to polar residues. A compositionally biased stretch (low complexity) spans 414 to 430 (SPASRAPDAPAAVSAAS). The Protein kinase domain occupies 472–723 (YRSLQKIGQG…ALGMLAHPFL (252 aa)). Residues 478-486 (IGQGASGGV) and Lys501 each bind ATP. Catalysis depends on Asp591, which acts as the Proton acceptor.

It belongs to the protein kinase superfamily. STE Ser/Thr protein kinase family. STE20 subfamily.

The protein localises to the cytoplasm. It localises to the nucleus. It carries out the reaction L-seryl-[protein] + ATP = O-phospho-L-seryl-[protein] + ADP + H(+). The enzyme catalyses L-threonyl-[protein] + ATP = O-phospho-L-threonyl-[protein] + ADP + H(+). Its function is as follows. MAP4K component of the MAPK pathway required for the mating pheromone response and the regulation of cell polarity and cell cycle. Phosphorylates histone H2B to form H2BS10ph. The protein is Serine/threonine-protein kinase SMU1 (SMU1) of Mycosarcoma maydis (Corn smut fungus).